We begin with the raw amino-acid sequence, 379 residues long: LIM/homeobox protein Lhx9 (379 aa).

2 LIM zinc-binding domains span residues 51–112 (TLCA…RFSV) and 113–175 (QRCA…LVQG). 2 disordered regions span residues 232–257 (ENDT…TSFK) and 310–379 (RQEN…TNLF). Residues 248 to 257 (KTKRMRTSFK) are compositionally biased toward basic residues. The segment at residues 249-308 (TKRMRTSFKHHQLRTTKSYFAINHNPDAKDLKQLAQKTGLTKRVLQVWFQNARAKFRRNL) is a DNA-binding region (homeobox). Polar residues predominate over residues 326-379 (APASTDSAALTPTGAASTLSDLTSPSLNVGASVTPNMDSHESGSPSQTTLTNLF).

As to expression, isoform 1 and isoform 3 are expressed in ovary, testis, brain and heart. Isoform 4 and isoform 5 are expressed in brain.

It localises to the nucleus. May be involved in gonadal development. The sequence is that of LIM/homeobox protein Lhx9 (lhx9) from Glandirana rugosa (Japanese wrinkled frog).